Consider the following 379-residue polypeptide: Probable purine permease 11 (379 aa).

10 consecutive transmembrane segments (helical) span residues 43 to 63 (WVLV…SVLL), 76 to 96 (WMAT…LLLL), 114 to 134 (IVLI…LYSV), 144 to 164 (YSLI…FINA), 167 to 187 (FTAL…LIAL), 203 to 223 (IVGF…LSLM), 239 to 259 (VLEM…IGLF), 294 to 313 (VCSV…FSNV), 314 to 330 (ISTL…LVVF), and 334 to 354 (MSGV…SYVY).

This sequence belongs to the purine permeases (TC 2.A.7.14) family. May form a complex with the potassium channel subunit KAT1.

The protein resides in the membrane. This is Probable purine permease 11 (PUP11) from Arabidopsis thaliana (Mouse-ear cress).